The sequence spans 338 residues: 4-hydroxythreonine-4-phosphate dehydrogenase (338 aa).

Residues His140 and Thr141 each coordinate substrate. A divalent metal cation-binding residues include His172, His217, and His271. Positions 279, 288, and 297 each coordinate substrate.

This sequence belongs to the PdxA family. In terms of assembly, homodimer. A divalent metal cation is required as a cofactor.

It localises to the cytoplasm. The enzyme catalyses 4-(phosphooxy)-L-threonine + NAD(+) = 3-amino-2-oxopropyl phosphate + CO2 + NADH. The protein operates within cofactor biosynthesis; pyridoxine 5'-phosphate biosynthesis; pyridoxine 5'-phosphate from D-erythrose 4-phosphate: step 4/5. Its function is as follows. Catalyzes the NAD(P)-dependent oxidation of 4-(phosphooxy)-L-threonine (HTP) into 2-amino-3-oxo-4-(phosphooxy)butyric acid which spontaneously decarboxylates to form 3-amino-2-oxopropyl phosphate (AHAP). The polypeptide is 4-hydroxythreonine-4-phosphate dehydrogenase (Prosthecochloris aestuarii (strain DSM 271 / SK 413)).